The chain runs to 513 residues: Ribonuclease Y (513 aa).

The helical transmembrane segment at 4 to 24 (NTAIIIAITTGFVAFIGGYFL) threads the bilayer. In terms of domain architecture, KH spans 203-266 (TVAVIPLPNE…ETARMALEKL (64 aa)). Residues 329 to 422 (VLKHSVEVAY…IQAADAISAA (94 aa)) enclose the HD domain.

Belongs to the RNase Y family.

Its subcellular location is the cell membrane. Its function is as follows. Endoribonuclease that initiates mRNA decay. This Desulforudis audaxviator (strain MP104C) protein is Ribonuclease Y.